Consider the following 430-residue polypeptide: UPF0597 protein Clos_2050 (430 aa).

This sequence belongs to the UPF0597 family.

This chain is UPF0597 protein Clos_2050, found in Alkaliphilus oremlandii (strain OhILAs) (Clostridium oremlandii (strain OhILAs)).